A 945-amino-acid chain; its full sequence is Bifunctional glutamine synthetase adenylyltransferase/adenylyl-removing enzyme (945 aa).

The tract at residues 1–441 (MLPLSAALQT…VFNDLIGDDS (441 aa)) is adenylyl removase. Residues 450 to 945 (YQHYHSLWQD…VRASWAKWLG (496 aa)) form an adenylyl transferase region.

This sequence belongs to the GlnE family. Mg(2+) serves as cofactor.

The enzyme catalyses [glutamine synthetase]-O(4)-(5'-adenylyl)-L-tyrosine + phosphate = [glutamine synthetase]-L-tyrosine + ADP. It carries out the reaction [glutamine synthetase]-L-tyrosine + ATP = [glutamine synthetase]-O(4)-(5'-adenylyl)-L-tyrosine + diphosphate. Functionally, involved in the regulation of glutamine synthetase GlnA, a key enzyme in the process to assimilate ammonia. When cellular nitrogen levels are high, the C-terminal adenylyl transferase (AT) inactivates GlnA by covalent transfer of an adenylyl group from ATP to specific tyrosine residue of GlnA, thus reducing its activity. Conversely, when nitrogen levels are low, the N-terminal adenylyl removase (AR) activates GlnA by removing the adenylyl group by phosphorolysis, increasing its activity. The regulatory region of GlnE binds the signal transduction protein PII (GlnB) which indicates the nitrogen status of the cell. In Serratia proteamaculans (strain 568), this protein is Bifunctional glutamine synthetase adenylyltransferase/adenylyl-removing enzyme.